The primary structure comprises 1066 residues: Phosphatidylinositol 4-kinase PIK1 (1066 aa).

A PIK helical domain is found at Met1–Asn133. A phosphoserine mark is found at Ser10 and Ser236. 3 disordered regions span residues Lys218–Leu240, Asp303–Asn411, and Asn564–Met624. Residues Asn342 to Asp356 are compositionally biased toward acidic residues. 2 stretches are compositionally biased toward polar residues: residues Gln374–Asn411 and Ser570–Leu597. Ser384 bears the Phosphoserine mark. Thr394 is subject to Phosphothreonine. Residues Ser396 and Ser592 each carry the phosphoserine modification. A compositionally biased stretch (low complexity) spans Ser598–Ala609. The PI3K/PI4K catalytic domain occupies Ala770–Ile1049. Positions Ile776–Tyr782 are G-loop. The catalytic loop stretch occupies residues Gln915–Asn923. The interval His934 to Thr958 is activation loop.

This sequence belongs to the PI3/PI4-kinase family. Type III PI4K subfamily. As to quaternary structure, interacts with FRQ1.

It localises to the nucleus. The protein localises to the golgi apparatus. The protein resides in the trans-Golgi network. It carries out the reaction a 1,2-diacyl-sn-glycero-3-phospho-(1D-myo-inositol) + ATP = a 1,2-diacyl-sn-glycero-3-phospho-(1D-myo-inositol 4-phosphate) + ADP + H(+). Functionally, acts on phosphatidylinositol (PI) in the first committed step in the production of the second messenger inositol 1,4,5,-trisphosphate. PIK1 is part of a nuclear phosphoinositide cycle and could control cytokinesis through the actin cytoskeleton. Involved in the response to mating pheromone. In Saccharomyces cerevisiae (strain ATCC 204508 / S288c) (Baker's yeast), this protein is Phosphatidylinositol 4-kinase PIK1.